Consider the following 117-residue polypeptide: Immunoglobulin lambda variable 1-51 (117 aa).

The signal sequence occupies residues 1 to 19; the sequence is MTCSPLLLTLLIHCTGSWA. Glutamine 20 bears the Pyrrolidone carboxylic acid mark. The interval 20-44 is framework-1; that stretch reads QSVLTQPPSVSAAPGQKVTISCSGS. The Ig-like domain occupies 20-117; sequence QSVLTQPPSV…CGTWDSSLSA (98 aa). Cysteine 41 and cysteine 108 form a disulfide bridge. The tract at residues 45 to 52 is complementarity-determining-1; the sequence is SSNIGNNY. The segment at 53 to 69 is framework-2; the sequence is VSWYQQLPGTAPKLLIY. Positions 70–72 are complementarity-determining-2; that stretch reads DNN. Residues 73-108 are framework-3; the sequence is KRPSGIPDRFSGSKSGTSATLGITGLQTGDEADYYC. A complementarity-determining-3 region spans residues 109–117; the sequence is GTWDSSLSA.

In terms of assembly, immunoglobulins are composed of two identical heavy chains and two identical light chains; disulfide-linked.

It localises to the secreted. The protein localises to the cell membrane. In terms of biological role, v region of the variable domain of immunoglobulin light chains that participates in the antigen recognition. Immunoglobulins, also known as antibodies, are membrane-bound or secreted glycoproteins produced by B lymphocytes. In the recognition phase of humoral immunity, the membrane-bound immunoglobulins serve as receptors which, upon binding of a specific antigen, trigger the clonal expansion and differentiation of B lymphocytes into immunoglobulins-secreting plasma cells. Secreted immunoglobulins mediate the effector phase of humoral immunity, which results in the elimination of bound antigens. The antigen binding site is formed by the variable domain of one heavy chain, together with that of its associated light chain. Thus, each immunoglobulin has two antigen binding sites with remarkable affinity for a particular antigen. The variable domains are assembled by a process called V-(D)-J rearrangement and can then be subjected to somatic hypermutations which, after exposure to antigen and selection, allow affinity maturation for a particular antigen. The sequence is that of Immunoglobulin lambda variable 1-51 from Homo sapiens (Human).